Reading from the N-terminus, the 207-residue chain is Large ribosomal subunit protein uL4 (207 aa).

Positions 47–77 are disordered; the sequence is GTADTKTRAEVSGGGRKPWRQKGTGRARHGS. Residues 63–77 are compositionally biased toward basic residues; it reads KPWRQKGTGRARHGS.

The protein belongs to the universal ribosomal protein uL4 family. Part of the 50S ribosomal subunit.

In terms of biological role, one of the primary rRNA binding proteins, this protein initially binds near the 5'-end of the 23S rRNA. It is important during the early stages of 50S assembly. It makes multiple contacts with different domains of the 23S rRNA in the assembled 50S subunit and ribosome. Functionally, forms part of the polypeptide exit tunnel. The chain is Large ribosomal subunit protein uL4 from Symbiobacterium thermophilum (strain DSM 24528 / JCM 14929 / IAM 14863 / T).